We begin with the raw amino-acid sequence, 79 residues long: MKTLLLTLVMVTIMCLDLGYTLTCYKGYHDTVVCKPHETICYRYLIPATHGNAIPARGCGTSCPGGNHPVCCSTDLCNK.

The first 21 residues, 1 to 21 (MKTLLLTLVMVTIMCLDLGYT), serve as a signal peptide directing secretion. Cystine bridges form between cysteine 24–cysteine 41, cysteine 34–cysteine 59, cysteine 63–cysteine 71, and cysteine 72–cysteine 77.

The protein belongs to the three-finger toxin family. Short-chain subfamily. Type III alpha-neurotoxin sub-subfamily. Expressed by the venom gland.

It localises to the secreted. Binds with high affinity to muscle nicotinic acetylcholine receptor (nAChR) and hinders acetylcholine binding to the receptor, thereby impairing neuromuscular transmission. Competes with the binding of alpha-bungarotoxin on muscle AChR (from Torpedo) with an IC(50) of 0.30 uM. Causes muscle paralysis, spasms and increased respiration. This chain is Short neurotoxin 2, found in Pseudonaja textilis (Eastern brown snake).